A 161-amino-acid polypeptide reads, in one-letter code: Arachidonate 5-lipoxygenase-activating protein (161 aa).

Residues 1 to 8 (MDQETVGN) lie on the Lumenal side of the membrane. A helical transmembrane segment spans residues 9–30 (VVLLAIVTLISVVQNGFFAHKV). Residues 31–52 (EHESRTQNGRSFQRTGTLAFER) lie on the Cytoplasmic side of the membrane. The helical transmembrane segment at 53–77 (VYTANQNCVDAYPTFLAVLWSAGLL) threads the bilayer. Residues 78 to 80 (CSQ) are Lumenal-facing. The helical transmembrane segment at 81–102 (VPAAFAGLMYLFVRQKYFVGYL) threads the bilayer. At 103–107 (GERTQ) the chain is on the cytoplasmic side. An intramembrane segment occupies 108 to 115 (STPGYIFG). The chain crosses the membrane as a helical span at residues 116–128 (KRIILFLFLMSVA). Topologically, residues 129 to 161 (GIFNYYLIFFFGSDFENYIKTISTTISPLLLIP) are lumenal.

The protein belongs to the MAPEG family. As to quaternary structure, homotrimer. Interacts with LTC4S and ALOX5.

The protein localises to the nucleus membrane. Its subcellular location is the endoplasmic reticulum membrane. Required for leukotriene biosynthesis by ALOX5 (5-lipoxygenase). Anchors ALOX5 to the membrane. Binds arachidonic acid, and could play an essential role in the transfer of arachidonic acid to ALOX5. Binds to MK-886, a compound that blocks the biosynthesis of leukotrienes. This chain is Arachidonate 5-lipoxygenase-activating protein (ALOX5AP), found in Homo sapiens (Human).